The sequence spans 248 residues: Probable transcriptional regulatory protein Acid_5948 (248 aa).

The protein belongs to the TACO1 family.

The protein localises to the cytoplasm. This is Probable transcriptional regulatory protein Acid_5948 from Solibacter usitatus (strain Ellin6076).